The chain runs to 213 residues: N-(5'-phosphoribosyl)anthranilate isomerase (213 aa).

It belongs to the TrpF family.

The catalysed reaction is N-(5-phospho-beta-D-ribosyl)anthranilate = 1-(2-carboxyphenylamino)-1-deoxy-D-ribulose 5-phosphate. It functions in the pathway amino-acid biosynthesis; L-tryptophan biosynthesis; L-tryptophan from chorismate: step 3/5. The protein is N-(5'-phosphoribosyl)anthranilate isomerase of Leptospira interrogans serogroup Icterohaemorrhagiae serovar copenhageni (strain Fiocruz L1-130).